The primary structure comprises 628 residues: tRNA uridine 5-carboxymethylaminomethyl modification enzyme MnmG (628 aa).

Residues 14-19 (GAGHAG), Val126, and Ser181 contribute to the FAD site. 273 to 287 (GPRYCPSIEDKVVRF) contacts NAD(+). Gln370 contacts FAD.

The protein belongs to the MnmG family. Homodimer. Heterotetramer of two MnmE and two MnmG subunits. It depends on FAD as a cofactor.

Its subcellular location is the cytoplasm. NAD-binding protein involved in the addition of a carboxymethylaminomethyl (cmnm) group at the wobble position (U34) of certain tRNAs, forming tRNA-cmnm(5)s(2)U34. This is tRNA uridine 5-carboxymethylaminomethyl modification enzyme MnmG from Pelobacter propionicus (strain DSM 2379 / NBRC 103807 / OttBd1).